The sequence spans 283 residues: Urease accessory protein UreD (283 aa).

The segment at 1–21 (MTQTQPVGTLRLTIDDQGPQG) is disordered.

This sequence belongs to the UreD family. As to quaternary structure, ureD, UreF and UreG form a complex that acts as a GTP-hydrolysis-dependent molecular chaperone, activating the urease apoprotein by helping to assemble the nickel containing metallocenter of UreC. The UreE protein probably delivers the nickel.

It localises to the cytoplasm. Functionally, probably acts in the maturation of urease via the functional incorporation of the urease nickel metallocenter. Required for urease expression. The sequence is that of Urease accessory protein UreD from Corynebacterium glutamicum (strain ATCC 13032 / DSM 20300 / JCM 1318 / BCRC 11384 / CCUG 27702 / LMG 3730 / NBRC 12168 / NCIMB 10025 / NRRL B-2784 / 534).